The primary structure comprises 562 residues: Valerena-4,7(11)-diene synthase (562 aa).

Residues D314, D318, and E467 each coordinate Mg(2+). The DDXXD motif signature appears at 314–318 (DDTYD).

This sequence belongs to the terpene synthase family. It depends on Mg(2+) as a cofactor. Predominantly expressed in root.

It catalyses the reaction (2E,6E)-farnesyl diphosphate = valerena-4,7(11)-diene + diphosphate. Catalyzes formation of valerena-4,7(11)-diene, one of the active ingredients responsible for the sedative effect extracted from Valeriana officinalis root. This is Valerena-4,7(11)-diene synthase (TPS2) from Valeriana officinalis (Valerian).